The primary structure comprises 394 residues: Phosphopentomutase (394 aa).

The Mn(2+) site is built by D13, D286, H291, D327, H328, and H339.

It belongs to the phosphopentomutase family. Mn(2+) is required as a cofactor.

The protein localises to the cytoplasm. It catalyses the reaction 2-deoxy-alpha-D-ribose 1-phosphate = 2-deoxy-D-ribose 5-phosphate. The catalysed reaction is alpha-D-ribose 1-phosphate = D-ribose 5-phosphate. It functions in the pathway carbohydrate degradation; 2-deoxy-D-ribose 1-phosphate degradation; D-glyceraldehyde 3-phosphate and acetaldehyde from 2-deoxy-alpha-D-ribose 1-phosphate: step 1/2. Functionally, isomerase that catalyzes the conversion of deoxy-ribose 1-phosphate (dRib-1-P) and ribose 1-phosphate (Rib-1-P) to deoxy-ribose 5-phosphate (dRib-5-P) and ribose 5-phosphate (Rib-5-P), respectively. This chain is Phosphopentomutase, found in Bacillus cereus (strain B4264).